A 239-amino-acid chain; its full sequence is Protein GrpE (239 aa).

2 disordered regions span residues 1–50 (MIEN…INTE) and 209–239 (MGHG…SEDV). Residues 16 to 30 (VLNQDNAPEDNSSAA) are compositionally biased toward polar residues. Over residues 218–239 (EEVEKDTVEEDIDSEENTSEDV) the composition is skewed to acidic residues.

The protein belongs to the GrpE family. Homodimer.

Its subcellular location is the cytoplasm. Participates actively in the response to hyperosmotic and heat shock by preventing the aggregation of stress-denatured proteins, in association with DnaK and GrpE. It is the nucleotide exchange factor for DnaK and may function as a thermosensor. Unfolded proteins bind initially to DnaJ; upon interaction with the DnaJ-bound protein, DnaK hydrolyzes its bound ATP, resulting in the formation of a stable complex. GrpE releases ADP from DnaK; ATP binding to DnaK triggers the release of the substrate protein, thus completing the reaction cycle. Several rounds of ATP-dependent interactions between DnaJ, DnaK and GrpE are required for fully efficient folding. The chain is Protein GrpE from Prochlorococcus marinus (strain MIT 9312).